The following is an 89-amino-acid chain: Small ribosomal subunit protein uS15 (89 aa).

It belongs to the universal ribosomal protein uS15 family. As to quaternary structure, part of the 30S ribosomal subunit. Forms a bridge to the 50S subunit in the 70S ribosome, contacting the 23S rRNA.

Its function is as follows. One of the primary rRNA binding proteins, it binds directly to 16S rRNA where it helps nucleate assembly of the platform of the 30S subunit by binding and bridging several RNA helices of the 16S rRNA. In terms of biological role, forms an intersubunit bridge (bridge B4) with the 23S rRNA of the 50S subunit in the ribosome. This Chlamydia muridarum (strain MoPn / Nigg) protein is Small ribosomal subunit protein uS15.